We begin with the raw amino-acid sequence, 757 residues long: MDVNPTLLFLKVPAQNAISTTFPYTGDPPYSHGTGTGYTMDTVNRTHQYSEKGKWTTNTETGAPQLNPIDGPLPEDNEPSGYAQTDCVLEAMAFLEESHPGIFENSCLETMEVIQQTRVDKLTQGRQTYDWTLNRNQPAATALANTIEVFRSNGLTANESGRLIDFLKDVIESMDKEEMEITTHFQRKRRVRDNMTKKMVTQRTIGKKKQRLNKRIYLIRALTLNTMTKDAERGKLKRRAIATPGMQIRGFVYFVETLARSICENLEQSGLPVGGNEKKAKLANVVRKMMTNSQDTELSFTITGDNTKWNENQNPRMFLAMITYITRNQPEWFRNVLSIAPIMFSNKMARLGKGYMFKSKSMKLRTQIPAEMLTSIDLKYFNESTRKKIEKIRPLLIDGTVSLSPGMMMGMFNMLSTVLGVSILNLGQKKYTKTTYWWDGLQSSDDFALIVNAPNHEGIQAGVDRFYRTCKLVGINMSKKKSYTNRTGTFEFTSFFYRYGFVANFSMELPSFGVSGINESDDMSIGVTVIKNNMINNDLGPATAQMALQLFIKDYRYTYRCHRGDTQIQTRRSFELKKLWEQTRSKAGLLISDGGPNLYNIRNLHIPEVCLKWELMDEDYQGRLCNPLNPFVSHKEIESVNNAVVMPAHGPAKSMEYDAVATTHSWIPKRNRSILNTSQRGILEDQQMYQKCCNLFEKFFPSSSYRRPVGISSMVEAMVSRARIDARIDFESGRIKKEEFAEIMKICSTIEELRRQK.

A disordered region spans residues 50-82; the sequence is SEKGKWTTNTETGAPQLNPIDGPLPEDNEPSGY. Residues 55–64 show a composition bias toward polar residues; sequence WTTNTETGAP. 2 short sequence motifs (nuclear localization signal) span residues 187-195 and 203-216; these read RKRRVRDNM and RTIG…NKRI. The segment at 249–256 is promoter-binding site; sequence RGFVYFVE. Positions 286–483 constitute a RdRp catalytic domain; sequence VRKMMTNSQD…GINMSKKKSY (198 aa).

The protein belongs to the influenza viruses polymerase PB1 family. As to quaternary structure, influenza RNA polymerase is composed of three subunits: PB1, PB2 and PA. Interacts (via N-terminus) with PA (via C-terminus). Interacts (via C-terminus) with PB2 (via N-terminus); this interaction is essential for transcription initiation. In terms of processing, phosphorylated by host PRKCA.

It localises to the host nucleus. Its subcellular location is the host cytoplasm. It carries out the reaction RNA(n) + a ribonucleoside 5'-triphosphate = RNA(n+1) + diphosphate. In terms of biological role, RNA-dependent RNA polymerase which is responsible for replication and transcription of virus RNA segments. The transcription of viral mRNAs occurs by a unique mechanism called cap-snatching. 5' methylated caps of cellular mRNAs are cleaved after 10-13 nucleotides by PA. In turn, these short capped RNAs are used as primers by PB1 for transcription of viral mRNAs. During virus replication, PB1 initiates RNA synthesis and copy vRNA into complementary RNA (cRNA) which in turn serves as a template for the production of more vRNAs. The sequence is that of RNA-directed RNA polymerase catalytic subunit from Influenza A virus (strain A/Leningrad/134/17/1957 H2N2).